A 199-amino-acid chain; its full sequence is Thioredoxin peroxidase (199 aa).

Residues 6 to 165 form the Thioredoxin domain; the sequence is AKLNHPAPHF…TLRLVKAFQF (160 aa). Cysteine 52 serves as the catalytic Cysteine sulfenic acid (-SOH) intermediate. The interval 179–199 is disordered; it reads PGSKTMKADPNGSQDYFSSMN. Over residues 189-199 the composition is skewed to polar residues; that stretch reads NGSQDYFSSMN.

Belongs to the peroxiredoxin family. AhpC/Prx1 subfamily. Homodimer; disulfide-linked, upon oxidation.

The catalysed reaction is a hydroperoxide + [thioredoxin]-dithiol = an alcohol + [thioredoxin]-disulfide + H2O. Thiol-specific peroxidase that catalyzes the reduction of hydrogen peroxide and organic hydroperoxides to water and alcohols, respectively. Plays a role in cell protection against oxidative stress by detoxifying peroxides and as sensor of hydrogen peroxide-mediated signaling events. This Trypanosoma brucei rhodesiense protein is Thioredoxin peroxidase.